A 264-amino-acid chain; its full sequence is Thymidylate synthase (264 aa).

Arg21 contributes to the dUMP binding site. (6R)-5,10-methylene-5,6,7,8-tetrahydrofolate is bound at residue His51. 126–127 provides a ligand contact to dUMP; it reads RR. Catalysis depends on Cys146, which acts as the Nucleophile. Residues 166–169, Asn177, and 207–209 each bind dUMP; these read RSCD and HLY. Asp169 is a binding site for (6R)-5,10-methylene-5,6,7,8-tetrahydrofolate. A (6R)-5,10-methylene-5,6,7,8-tetrahydrofolate-binding site is contributed by Ala263.

This sequence belongs to the thymidylate synthase family. Bacterial-type ThyA subfamily. In terms of assembly, homodimer.

It is found in the cytoplasm. The enzyme catalyses dUMP + (6R)-5,10-methylene-5,6,7,8-tetrahydrofolate = 7,8-dihydrofolate + dTMP. It functions in the pathway pyrimidine metabolism; dTTP biosynthesis. In terms of biological role, catalyzes the reductive methylation of 2'-deoxyuridine-5'-monophosphate (dUMP) to 2'-deoxythymidine-5'-monophosphate (dTMP) while utilizing 5,10-methylenetetrahydrofolate (mTHF) as the methyl donor and reductant in the reaction, yielding dihydrofolate (DHF) as a by-product. This enzymatic reaction provides an intracellular de novo source of dTMP, an essential precursor for DNA biosynthesis. In Shewanella sp. (strain ANA-3), this protein is Thymidylate synthase.